Reading from the N-terminus, the 834-residue chain is Enhancer of filamentation 1 (834 aa).

The SH3 domain occupies 3–65 (ARNLMARALY…PGNRVKLLIG (63 aa)). A phosphotyrosine mark is found at tyrosine 92, tyrosine 164, tyrosine 166, tyrosine 177, tyrosine 189, tyrosine 214, and tyrosine 223. At serine 296 the chain carries Phosphoserine. Tyrosine 317 is subject to Phosphotyrosine. Disordered stretches follow at residues 328–402 (PPAE…DKRL) and 584–624 (SQMP…SERS). Basic and acidic residues predominate over residues 332-344 (TSEKANPEERDGV). Positions 360 to 363 (DVVD) match the Caspase cleavage related site motif. A compositionally biased stretch (low complexity) spans 368–397 (LSFSSTGSTRSNMSTSSTTSKESSVSASPS). Serine 369 is subject to Phosphoserine. A divergent helix-loop-helix motif region spans residues 710 to 760 (FYYDQCETHYISLLNAIDALFSCVSSAQPPRIFVAHSKFVILSAHKLVFIG). Positions 710–834 (FYYDQCETHY…KRSLLEMATF (125 aa)) are required for interaction with PLK1. Phosphoserine is present on serine 780. Threonine 804 is subject to Phosphothreonine.

It belongs to the CAS family. Homodimer. Forms heterodimers with BCAR1/p130cas. Forms complexes with PTK2B/RAFTK, adapter protein CRKL and LYN kinase. Part of a complex composed of NEDD9, AURKA and CTTN; within the complex NEDD9 acts as a scaffold protein and is required for complex formation. Part of a ternary complex composed of SMAD3, ITCH/AIP4 and NEDD9/HEF1; within the complex NEDD9/HEF1 interacts (via N-terminus) with ITCH/AIP4; the complex mediates ubiquitination and proteasomal degradation of NEDD9/HEF1. Interacts with ID2. Interacts with CTTN (via N-terminus). Interacts with MICAL. Interacts with TXNL4/DIM1. Interacts with BCAR3 (via Ras-GEF domain). Interacts with SH2D3C isoform 1 and isoform 2. Interacts with BCAR3. Interacts with ECT2. Interacts with PTPN11/SHP-2 (via SH2 domains); the interaction is enhanced when NEDD9/CAS-L is tyrosine phosphorylated. Interacts (via C-terminus) with PLK1 (via polo box domain). Interacts with NKX2-5. Interacts with SMAD3; the interaction is inhibited by oxidation of NEDD9. Interacts with ABL1; interaction is induced by CXCL12-mediated phosphorylation of NEDD/HEF1. Interacts (via SH3 domain) with PTK2/FAK. Interacts with FYN; in the presence of PTK2. Interacts with INPPL1/SHIP2. Polyubiquitinated by ITCH/AIP4, leading to proteasomal degradation. In terms of processing, PTK2/FAK1 phosphorylates the protein at the YDYVHL motif (conserved among all cas proteins) following integrin stimulation. The SRC family kinases (FYN, SRC, LCK and CRK) are recruited to the phosphorylated sites and can phosphorylate other tyrosine residues. Ligation of either integrin beta-1 or B-cell antigen receptor on tonsillar B-cells and B-cell lines promotes tyrosine phosphorylation and both integrin and BCR-mediated tyrosine phosphorylation requires an intact actin network. Phosphorylation is required to recruit NEDD9 to T-cell receptor microclusters at the periphery of newly formed immunological synapses. In fibroblasts transformation with oncogene v-ABL results in an increase in tyrosine phosphorylation. Transiently phosphorylated following CD3 cross-linking and this phosphorylated form binds to CRKL and C3G. A mutant lacking the SH3 domain is phosphorylated upon CD3 cross-linking but not upon integrin beta-1 cross-linking. Tyrosine phosphorylation occurs upon stimulation of the G-protein coupled C1a calcitonin receptor. Calcitonin-stimulated tyrosine phosphorylation is mediated by calcium- and protein kinase C-dependent mechanisms and requires the integrity of the actin cytoskeleton. Phosphorylation at Ser-369 induces proteasomal degradation. Phosphorylated by LYN. Phosphorylation at Ser-780 by CSNK1D or CSNK1E, or phosphorylation of Thr-804 by CSNK1E enhances the interaction of NEDD9 with PLK1.

It is found in the cytoplasm. Its subcellular location is the cell cortex. The protein resides in the nucleus. The protein localises to the golgi apparatus. It localises to the cell projection. It is found in the lamellipodium. Its subcellular location is the cell junction. The protein resides in the focal adhesion. The protein localises to the cytoskeleton. It localises to the spindle pole. It is found in the cilium. Its subcellular location is the cilium basal body. The protein resides in the basolateral cell membrane. In terms of biological role, negatively regulates embryonic fibroblast migration. May play an important role in integrin beta-1 or B cell antigen receptor (BCR) mediated signaling in B- and T-cells. Integrin beta-1 stimulation leads to recruitment of various proteins including CRKl and SHPTP2 to the tyrosine phosphorylated form. Promotes adhesion and migration of lymphocytes; as a result required for the correct migration of lymphocytes to the spleen and other secondary lymphoid organs. Plays a role in the organization of T-cell F-actin cortical cytoskeleton and the centralization of T-cell receptor microclusters at the immunological synapse. Negatively regulates cilia outgrowth in polarized cysts. Modulates cilia disassembly via activation of AURKA-mediated phosphorylation of HDAC6 and subsequent deacetylation of alpha-tubulin. In conjunction with NKX2-5, positively regulates transcription of genes such as COL3A1 and MMP2, resulting in increased pulmonary endothelial fibrosis in response to hypoxia. Positively regulates RANKL-induced osteoclastogenesis. Required for the maintenance of hippocampal dendritic spines in the dentate gyrus and CA1 regions, thereby involved in spatial learning and memory. This Canis lupus familiaris (Dog) protein is Enhancer of filamentation 1.